Here is a 258-residue protein sequence, read N- to C-terminus: tRNA (guanine-N(1)-)-methyltransferase (258 aa).

S-adenosyl-L-methionine-binding positions include glycine 122 and 142–147 (LGDFVL).

It belongs to the RNA methyltransferase TrmD family. As to quaternary structure, homodimer.

The protein resides in the cytoplasm. The enzyme catalyses guanosine(37) in tRNA + S-adenosyl-L-methionine = N(1)-methylguanosine(37) in tRNA + S-adenosyl-L-homocysteine + H(+). Its function is as follows. Specifically methylates guanosine-37 in various tRNAs. This chain is tRNA (guanine-N(1)-)-methyltransferase, found in Hahella chejuensis (strain KCTC 2396).